Reading from the N-terminus, the 878-residue chain is Alanine--tRNA ligase (878 aa).

Zn(2+)-binding residues include His564, His568, Cys665, and His669.

The protein belongs to the class-II aminoacyl-tRNA synthetase family. The cofactor is Zn(2+).

Its subcellular location is the cytoplasm. The catalysed reaction is tRNA(Ala) + L-alanine + ATP = L-alanyl-tRNA(Ala) + AMP + diphosphate. In terms of biological role, catalyzes the attachment of alanine to tRNA(Ala) in a two-step reaction: alanine is first activated by ATP to form Ala-AMP and then transferred to the acceptor end of tRNA(Ala). Also edits incorrectly charged Ser-tRNA(Ala) and Gly-tRNA(Ala) via its editing domain. In Natranaerobius thermophilus (strain ATCC BAA-1301 / DSM 18059 / JW/NM-WN-LF), this protein is Alanine--tRNA ligase.